A 446-amino-acid chain; its full sequence is N-succinylarginine dihydrolase (446 aa).

Substrate contacts are provided by residues 19–28, Asn110, and 137–138; these read AGLSFGNVAS and HR. Glu174 is a catalytic residue. Arg213 contributes to the substrate binding site. Residue His249 is part of the active site. 2 residues coordinate substrate: Asp251 and Asn364. Cys370 serves as the catalytic Nucleophile.

Belongs to the succinylarginine dihydrolase family. Homodimer.

It catalyses the reaction N(2)-succinyl-L-arginine + 2 H2O + 2 H(+) = N(2)-succinyl-L-ornithine + 2 NH4(+) + CO2. It participates in amino-acid degradation; L-arginine degradation via AST pathway; L-glutamate and succinate from L-arginine: step 2/5. Its function is as follows. Catalyzes the hydrolysis of N(2)-succinylarginine into N(2)-succinylornithine, ammonia and CO(2). The protein is N-succinylarginine dihydrolase of Burkholderia multivorans (strain ATCC 17616 / 249).